The chain runs to 131 residues: Holo-[acyl-carrier-protein] synthase (131 aa).

Mg(2+) is bound by residues D8 and E57.

Belongs to the P-Pant transferase superfamily. AcpS family. It depends on Mg(2+) as a cofactor.

The protein localises to the cytoplasm. The enzyme catalyses apo-[ACP] + CoA = holo-[ACP] + adenosine 3',5'-bisphosphate + H(+). Its function is as follows. Transfers the 4'-phosphopantetheine moiety from coenzyme A to a Ser of acyl-carrier-protein. In Desulforudis audaxviator (strain MP104C), this protein is Holo-[acyl-carrier-protein] synthase.